Here is a 37-residue protein sequence, read N- to C-terminus: Peptide encoded by miPEP164a (37 aa).

Regulatory peptide encoded by the primary transcript (pri-miR164a) of the microRNA miR164a that enhances the accumulation of its corresponding mature miRNA. Acts probably as a transcriptional activator of its corresponding pri-miRNA. The polypeptide is Peptide encoded by miPEP164a (Arabidopsis thaliana (Mouse-ear cress)).